Consider the following 491-residue polypeptide: Acetyl-coenzyme A carboxylase carboxyl transferase subunit beta, chloroplastic (491 aa).

The disordered stretch occupies residues 28-56; the sequence is LGPIENTSESEDPNRNDMKKNSHSWGSRD. Residues 223–491 form the CoA carboxyltransferase N-terminal domain; that stretch reads LWVQCENCYG…FPLNKNSIEH (269 aa). Zn(2+) contacts are provided by cysteine 227, cysteine 230, cysteine 246, and cysteine 249. A C4-type zinc finger spans residues 227-249; it reads CENCYGLNYKKILKSKMNLCEQC.

Belongs to the AccD/PCCB family. As to quaternary structure, acetyl-CoA carboxylase is a heterohexamer composed of biotin carboxyl carrier protein, biotin carboxylase and 2 subunits each of ACCase subunit alpha and ACCase plastid-coded subunit beta (accD). It depends on Zn(2+) as a cofactor.

The protein localises to the plastid. It localises to the chloroplast stroma. It catalyses the reaction N(6)-carboxybiotinyl-L-lysyl-[protein] + acetyl-CoA = N(6)-biotinyl-L-lysyl-[protein] + malonyl-CoA. It participates in lipid metabolism; malonyl-CoA biosynthesis; malonyl-CoA from acetyl-CoA: step 1/1. Component of the acetyl coenzyme A carboxylase (ACC) complex. Biotin carboxylase (BC) catalyzes the carboxylation of biotin on its carrier protein (BCCP) and then the CO(2) group is transferred by the transcarboxylase to acetyl-CoA to form malonyl-CoA. The chain is Acetyl-coenzyme A carboxylase carboxyl transferase subunit beta, chloroplastic from Daucus carota (Wild carrot).